The primary structure comprises 222 residues: Thymidylate kinase (222 aa).

7–14 (GIDGAGKS) provides a ligand contact to ATP.

Belongs to the thymidylate kinase family.

It catalyses the reaction dTMP + ATP = dTDP + ADP. In terms of biological role, phosphorylation of dTMP to form dTDP in both de novo and salvage pathways of dTTP synthesis. The chain is Thymidylate kinase from Chlorobium chlorochromatii (strain CaD3).